Here is a 252-residue protein sequence, read N- to C-terminus: Trans-aconitate 2-methyltransferase (252 aa).

Belongs to the methyltransferase superfamily. Tam family.

Its subcellular location is the cytoplasm. The catalysed reaction is trans-aconitate + S-adenosyl-L-methionine = (E)-3-(methoxycarbonyl)pent-2-enedioate + S-adenosyl-L-homocysteine. Catalyzes the S-adenosylmethionine monomethyl esterification of trans-aconitate. This chain is Trans-aconitate 2-methyltransferase, found in Escherichia coli O1:K1 / APEC.